Here is a 200-residue protein sequence, read N- to C-terminus: Methylthioribulose-1-phosphate dehydratase (200 aa).

His-90 and His-92 together coordinate Zn(2+).

The protein belongs to the aldolase class II family. MtnB subfamily. Zn(2+) serves as cofactor.

It catalyses the reaction 5-(methylsulfanyl)-D-ribulose 1-phosphate = 5-methylsulfanyl-2,3-dioxopentyl phosphate + H2O. The protein operates within amino-acid biosynthesis; L-methionine biosynthesis via salvage pathway; L-methionine from S-methyl-5-thio-alpha-D-ribose 1-phosphate: step 2/6. Catalyzes the dehydration of methylthioribulose-1-phosphate (MTRu-1-P) into 2,3-diketo-5-methylthiopentyl-1-phosphate (DK-MTP-1-P). The protein is Methylthioribulose-1-phosphate dehydratase of Sodalis glossinidius (strain morsitans).